A 701-amino-acid chain; its full sequence is Dynein axonemal intermediate chain 1 (701 aa).

Disordered stretches follow at residues Met-1–Pro-45 and Glu-119–Ala-165. Phosphoserine occurs at positions 124 and 127. The segment covering Glu-136–Ala-155 has biased composition (acidic residues). 5 WD repeats span residues Ser-382–Cys-422, Lys-431–Ile-474, Ala-539–Ile-579, Asp-581–Ile-621, and Lys-629–Pro-668.

This sequence belongs to the dynein intermediate chain family. In terms of assembly, consists of at least two heavy chains and a number of intermediate and light chains. Interacts with BICD2. Interacts with CFAP45 and CFAP52. Interacts with CFAP53.

The protein resides in the cytoplasm. It localises to the cytoskeleton. It is found in the cilium axoneme. In terms of biological role, part of the dynein complex of respiratory cilia. This chain is Dynein axonemal intermediate chain 1 (Dnai1), found in Mus musculus (Mouse).